The following is a 953-amino-acid chain: Kinesin-like protein KIF23 (953 aa).

The short motif at 7-11 is the Nuclear localization signal element; it reads KTVRK. The region spanning 25–436 is the Kinesin motor domain; the sequence is PVGVYCRVRP…MRFAEVTQEV (412 aa). 112–119 is an ATP binding site; sequence GVTGSGKT. Residues Ser155 and Ser160 each carry the phosphoserine modification. Residues 542-618 are a coiled coil; the sequence is QEKLNEREKV…RRLEARLQGM (77 aa). Residues Lys572 and Lys587 each participate in a glycyl lysine isopeptide (Lys-Gly) (interchain with G-Cter in SUMO2) cross-link. Ser606 is subject to Phosphoserine. Residues Lys625, Lys648, Lys663, and Lys666 each participate in a glycyl lysine isopeptide (Lys-Gly) (interchain with G-Cter in SUMO2) cross-link. The disordered stretch occupies residues 658-695; sequence IVTEPKPEKPERPSRERDREKIIPRSVSPSPLPLSSNN. Positions 662 to 680 are enriched in basic and acidic residues; it reads PKPEKPERPSRERDREKII. The span at 681–693 shows a compositional bias: low complexity; that stretch reads PRSVSPSPLPLSS. Phosphoserine is present on residues Ser683 and Ser685. The residue at position 739 (Thr739) is a Phosphothreonine. A Phosphoserine modification is found at Ser807. Glycyl lysine isopeptide (Lys-Gly) (interchain with G-Cter in SUMO2) cross-links involve residues Lys816 and Lys847. Ser860 is subject to Phosphoserine. Residues Lys867, Lys870, and Lys892 each participate in a glycyl lysine isopeptide (Lys-Gly) (interchain with G-Cter in SUMO2) cross-link. Disordered regions lie at residues 894–921 and 934–953; these read ELPT…EWTD and AGSQ…RKKP. Phosphoserine is present on Ser904. Position 920 is a phosphothreonine (Thr920). Residue Lys949 forms a Glycyl lysine isopeptide (Lys-Gly) (interchain with G-Cter in SUMO2) linkage.

The protein belongs to the TRAFAC class myosin-kinesin ATPase superfamily. Kinesin family. In terms of assembly, heterotetramer of two molecules each of RACGAP1 and KIF23. Found in the centralspindlin complex. Interacts with RACGAP1; the interaction is direct. Interacts with ECT2 and PRC1. Interacts with ANXA11 during cytokinesis. Interacts with BIRC6/bruce and USP8/UBPY. Interacts with ARF6, forming heterodimers and heterotetramers. Post-translationally, ubiquitinated. Deubiquitinated by USP8/UBPY. Detected in testis and ovary from newborn mice (at protein level). Detected in brain, spinal cord and small intestine.

The protein localises to the nucleus. It localises to the cytoplasm. Its subcellular location is the cytoskeleton. The protein resides in the spindle. It is found in the midbody. The protein localises to the midbody ring. Component of the centralspindlin complex that serves as a microtubule-dependent and Rho-mediated signaling required for the myosin contractile ring formation during the cell cycle cytokinesis. Essential for cytokinesis in Rho-mediated signaling. Required for the localization of ECT2 to the central spindle. Plus-end-directed motor enzyme that moves antiparallel microtubules in vitro. This is Kinesin-like protein KIF23 (Kif23) from Mus musculus (Mouse).